A 388-amino-acid chain; its full sequence is Mannitol-1-phosphate 5-dehydrogenase (388 aa).

5–16 (AIQFGGGNIGRG) provides a ligand contact to NAD(+). The active site involves lysine 213.

Belongs to the mannitol dehydrogenase family. In terms of assembly, monomer.

The enzyme catalyses D-mannitol 1-phosphate + NAD(+) = beta-D-fructose 6-phosphate + NADH + H(+). Catalyzes the NAD(H)-dependent interconversion of D-fructose 6-phosphate and D-mannitol 1-phosphate in the metabolism of mannitol. Has a strong preference for NADH over NADPH. The chain is Mannitol-1-phosphate 5-dehydrogenase (mpdA) from Aspergillus niger (strain ATCC MYA-4892 / CBS 513.88 / FGSC A1513).